A 457-amino-acid polypeptide reads, in one-letter code: Beta-1,4-mannosyltransferase egh (457 aa).

Transmembrane regions (helical) follow at residues 8 to 28 (LLHC…SGGI), 35 to 55 (FTLV…LYLL), 57 to 77 (FLTL…VFYN), 346 to 366 (LLGI…NIIF), 378 to 398 (VDFV…FGVI), and 415 to 435 (VLGA…AVIW).

This sequence belongs to the glycosyltransferase 2 family.

It localises to the membrane. Glycosyltransferase with a proposed role in glycosphingolipid biosynthesis. Neurogenic protein implicated in epithelial development. Critical component of a differential oocyte-follicle cell adhesive system. This chain is Beta-1,4-mannosyltransferase egh (egh), found in Drosophila melanogaster (Fruit fly).